The primary structure comprises 352 residues: Histidine biosynthesis bifunctional protein HisB (352 aa).

The histidinol-phosphatase stretch occupies residues 1-164 (MSQKILFIDR…EIENEILSSF (164 aa)). The active-site Nucleophile is the Asp9. 2 residues coordinate Mg(2+): Asp9 and Asp11. The Proton donor role is filled by Asp11. Zn(2+) is bound by residues Cys93, His95, Cys101, and Cys103. Asp130 serves as a coordination point for Mg(2+). An imidazoleglycerol-phosphate dehydratase region spans residues 165–352 (RSASYQRTTK…ENLASSKGVI (188 aa)).

It in the N-terminal section; belongs to the histidinol-phosphatase family. This sequence in the C-terminal section; belongs to the imidazoleglycerol-phosphate dehydratase family. Mg(2+) is required as a cofactor. It depends on Zn(2+) as a cofactor.

The protein resides in the cytoplasm. The catalysed reaction is D-erythro-1-(imidazol-4-yl)glycerol 3-phosphate = 3-(imidazol-4-yl)-2-oxopropyl phosphate + H2O. It catalyses the reaction L-histidinol phosphate + H2O = L-histidinol + phosphate. It functions in the pathway amino-acid biosynthesis; L-histidine biosynthesis; L-histidine from 5-phospho-alpha-D-ribose 1-diphosphate: step 6/9. Its pathway is amino-acid biosynthesis; L-histidine biosynthesis; L-histidine from 5-phospho-alpha-D-ribose 1-diphosphate: step 8/9. This chain is Histidine biosynthesis bifunctional protein HisB, found in Campylobacter jejuni subsp. jejuni serotype O:23/36 (strain 81-176).